A 467-amino-acid polypeptide reads, in one-letter code: Interleukin-6 receptor subunit alpha (467 aa).

A signal peptide spans 1–19 (MLAVGCALLTALLAAPGMA). Residues 20–112 (LAPRGCSKLE…AGSVRLLVDA (93 aa)) form the Ig-like C2-type domain. Residues 20–365 (LAPRGCSKLE…VQDSASVPLP (346 aa)) lie on the Extracellular side of the membrane. Intrachain disulfides connect cysteine 25/cysteine 193, cysteine 47/cysteine 96, cysteine 121/cysteine 132, and cysteine 165/cysteine 176. Asparagine 55 and asparagine 93 each carry an N-linked (GlcNAc...) asparagine glycan. 2 consecutive Fibronectin type-III domains span residues 113–217 (PPEE…LQPD) and 218–316 (PPVN…IPWT). N-linked (GlcNAc...) asparagine glycans are attached at residues asparagine 221 and asparagine 245. Positions 303 to 307 (WSEWS) match the WSXWS motif motif. The segment at 315-357 (WTESRSSPAETELPLSTQAPTTNEDDEDISSKESANATSLPVQ) is disordered. Composition is skewed to polar residues over residues 317–336 (ESRSSPAETELPLSTQAPTT) and 346–357 (KESANATSLPVQ). Asparagine 350 carries N-linked (GlcNAc...) asparagine glycosylation. Threonine 352 carries an O-linked (GlcNAc) threonine glycan. Residues 366-386 (TFLVAGGSLAFGTLLCIGIIL) traverse the membrane as a helical segment. The Cytoplasmic segment spans residues 387-467 (RFKKTGQLQA…VSNRDYFFPR (81 aa)). A disordered region spans residues 428–467 (ISPPVSPNSLGDNTSRNSRPEARGPQSPYDVSNRDYFFPR).

Belongs to the type I cytokine receptor family. Type 3 subfamily. Component of a hexamer of two molecules each of IL6, IL6R and IL6ST; first binds to IL6 to associate with the signaling subunit IL6ST. Interacts (via N-terminal ectodomain) with SORL1; this interaction may affect IL6-binding to IL6R, hence decrease IL6 'classic-signaling'. As to quaternary structure, also interacts with SORL1; this interaction leads to soluble IL6R internalization. May form a trimeric complex with the soluble SORL1 ectodomain and circulating IL6 receptor; this interaction might stabilize circulating IL6, hence promote IL6 'trans-signaling'. In terms of processing, a short soluble form is also released from the membrane by proteolysis. The sIL6R is formed by limited proteolysis of membrane-bound receptors, a process referred to as ectodomain shedding. mIL6R is cleaved by the proteases ADAM10 and ADAM17. Glycosylated. Glycosylation is dispensable for transport, signaling, and cell-surface turnover. Glycosylation at Asn-55 is a protease-regulatory exosite. Glycosylation is required for ADAM17-mediated proteolysis. As to expression, expressed in liver.

Its subcellular location is the cell membrane. The protein resides in the secreted. Its activity is regulated as follows. Classic and trans-signaling are both inhibited by tocilizumab, a humanized monoclonal antibody that blocks interleukin IL6R signaling. Its function is as follows. Part of the receptor for interleukin 6. Binds to IL6 with low affinity, but does not transduce a signal. Signal activation necessitate an association with IL6ST. Activation leads to the regulation of the immune response, acute-phase reactions and hematopoiesis. The interaction with membrane-bound IL6R and IL6ST stimulates 'classic signaling', the restricted expression of the IL6R limits classic IL6 signaling to only a few tissues such as the liver and some cells of the immune system. Whereas the binding of IL6 and soluble IL6R to IL6ST stimulates 'trans-signaling'. Alternatively, 'cluster signaling' occurs when membrane-bound IL6:IL6R complexes on transmitter cells activate IL6ST receptors on neighboring receiver cells. Functionally, signaling via the membrane-bound IL6R is mostly regenerative and anti-inflammatory. Drives naive CD4(+) T cells to the Th17 lineage, through 'cluster signaling' by dendritic cells. In terms of biological role, soluble form of IL6 receptor (sIL6R) that acts as an agonist of IL6 activity. The IL6:sIL6R complex (hyper-IL6) binds to IL6ST/gp130 on cell surfaces and induces signaling also on cells that do not express membrane-bound IL6R in a process called IL6 'trans-signaling'. sIL6R is causative for the pro-inflammatory properties of IL6 and an important player in the development of chronic inflammatory diseases. In complex with IL6, is required for induction of VEGF production. Plays a protective role during liver injury, being required for maintenance of tissue regeneration. 'Trans-signaling' in central nervous system regulates energy and glucose homeostasis. In Sus scrofa (Pig), this protein is Interleukin-6 receptor subunit alpha (IL6R).